The primary structure comprises 828 residues: BEN domain-containing protein 3 (828 aa).

Lysine 20 participates in a covalent cross-link: Glycyl lysine isopeptide (Lys-Gly) (interchain with G-Cter in SUMO); alternate. A Glycyl lysine isopeptide (Lys-Gly) (interchain with G-Cter in SUMO1); alternate cross-link involves residue lysine 20. Lysine 20 participates in a covalent cross-link: Glycyl lysine isopeptide (Lys-Gly) (interchain with G-Cter in SUMO2); alternate. Glycyl lysine isopeptide (Lys-Gly) (interchain with G-Cter in SUMO2) cross-links involve residues lysine 41, lysine 56, lysine 58, lysine 73, lysine 128, lysine 129, lysine 137, lysine 142, and lysine 158. The Nuclear localization signal motif lies at 56–58; that stretch reads KRK. The residue at position 164 (serine 164) is a Phosphoserine. The interval 164-184 is disordered; that stretch reads SPSSLRLLNEPQKRDCGSTGA. Residue lysine 176 forms a Glycyl lysine isopeptide (Lys-Gly) (interchain with G-Cter in SUMO2) linkage. One can recognise a BEN 1 domain in the interval 242-343; it reads PPPEYQLTAA…DFFSRFWAQR (102 aa). Residue serine 379 is modified to Phosphoserine. In terms of domain architecture, BEN 2 spans 387 to 487; the sequence is ASDHVVDTQD…DELEGLGLDA (101 aa). Lysine 427 participates in a covalent cross-link: Glycyl lysine isopeptide (Lys-Gly) (interchain with G-Cter in SUMO2). The tract at residues 483-504 is disordered; the sequence is LGLDAGSEGDPPRDDCYDSSSL. Phosphoserine is present on serine 489. Lysine 512 is covalently cross-linked (Glycyl lysine isopeptide (Lys-Gly) (interchain with G-Cter in SUMO); alternate). A Glycyl lysine isopeptide (Lys-Gly) (interchain with G-Cter in SUMO2); alternate cross-link involves residue lysine 512. Residue lysine 528 forms a Glycyl lysine isopeptide (Lys-Gly) (interchain with G-Cter in SUMO2) linkage. Residues 548-650 form the BEN 3 domain; sequence VPGADCLLSK…ERCRRRDTEQ (103 aa). Residue lysine 700 forms a Glycyl lysine isopeptide (Lys-Gly) (interchain with G-Cter in SUMO2) linkage. A BEN 4 domain is found at 715-816; it reads VPSPYLLSDK…ERCRRPNRKK (102 aa).

Homooligomer, probably a homooctamer. Interacts with HDAC2 and HDAC3, but not HDAC1. Interacts with SALL4. Interacts with SMARCA5/SNF2H, BAZ2A/TIP5 and USP21. Interacts with the nucleosome remodeling and histone deacetylase (NuRD) repressor complex. Interacts (via BEN domains 1 and 3) with ERCC6L (via N-terminal TPR repeat); the interaction is direct. Sumoylated at Lys-20 by SUMO1 and at Lys-512 by SUMO1, SUMO2 and SUMO3. Sumoylation probably occurs sequentially, with that of Lys-20 preceding that of Lys-512. It does not alter association with heterochromatin, but is required for the repression of transcription. Expressed at least in heart, kidney, liver, ovary and spleen, with highest levels in spleen and lowest in heart. Expressed on the surface of T-cells.

The protein resides in the nucleus. The protein localises to the nucleolus. In terms of biological role, transcriptional repressor which associates with the NoRC (nucleolar remodeling complex) complex and plays a key role in repressing rDNA transcription. The sumoylated form modulates the stability of the NoRC complex component BAZ2A/TIP5 by controlling its USP21-mediated deubiquitination. Binds to unmethylated major satellite DNA and is involved in the recruitment of the Polycomb repressive complex 2 (PRC2) to major satellites. Stimulates the ERCC6L translocase and ATPase activities. This is BEN domain-containing protein 3 (BEND3) from Homo sapiens (Human).